The sequence spans 514 residues: Carboxysome shell carbonic anhydrase (514 aa).

The interval 1-144 is N-terminal domain; the sequence is MNTRNTRSKQ…LTAATEQFSR (144 aa). Residues 151–397 form a catalytic domain region; it reads DDSASAIGFF…GRYPPNDIGH (247 aa). Position 173 (Cys-173) interacts with Zn(2+). Catalysis depends on Asp-175, which acts as the Proton acceptor. The Zn(2+) site is built by His-242 and Cys-253. Residues 398 to 514 form a C-terminal domain region; sequence AERYISVGDG…GSPIEEVASA (117 aa).

The protein belongs to the beta-class carbonic anhydrase family. CsoSCA subfamily. Homodimer, may form filaments. It depends on Zn(2+) as a cofactor.

Its subcellular location is the carboxysome. The enzyme catalyses hydrogencarbonate + H(+) = CO2 + H2O. Carbonic anhydrase activity is inhibited by ethoxyzolamide, dithiothreitol, cyanide, and divalent metal chelators dipicolinic acid and nitrilotriacetic acid. In terms of biological role, reversible hydration of carbon dioxide. Essential for chemolithotrophic carbon dioxide fixation, supplies CO(2) to RuBisCO (ribulose bisphosphate carboxylase, cbbL-cbbS) in the carboxysome. There are estimated to be 40 CsoSCA dimers per carboxysome. Functionally, unlike beta-carboxysomes, alpha-carboxysomes (Cb) can form without cargo protein. CsoS2 is essential for Cb formation and is also capable of targeting foreign proteins to the Cb. The Cb shell assembles with the aid of CsoS2; CsoS1A, CsoS1B and CsoS1C form the majority of the shell while CsoS4A and CsoS4B form vertices. CsoS1D forms pseudohexamers that probably control metabolite flux into and out of the shell. The sequence is that of Carboxysome shell carbonic anhydrase from Halothiobacillus neapolitanus (strain ATCC 23641 / c2) (Thiobacillus neapolitanus).